We begin with the raw amino-acid sequence, 73 residues long: Methionyl-tRNA formyltransferase (73 aa).

Belongs to the Fmt family.

The catalysed reaction is L-methionyl-tRNA(fMet) + (6R)-10-formyltetrahydrofolate = N-formyl-L-methionyl-tRNA(fMet) + (6S)-5,6,7,8-tetrahydrofolate + H(+). Its function is as follows. Attaches a formyl group to the free amino group of methionyl-tRNA(fMet). The formyl group appears to play a dual role in the initiator identity of N-formylmethionyl-tRNA by promoting its recognition by IF2 and preventing the misappropriation of this tRNA by the elongation apparatus. In Rickettsia parkeri, this protein is Methionyl-tRNA formyltransferase (fmt).